Consider the following 528-residue polypeptide: Protein arginine N-methyltransferase 3 (528 aa).

Residues 1–42 form a disordered region; it reads MCSLAAGNGQGAELGPEPLELSDSGDDAGWEDEDADAEPAQG. An N-acetylcysteine modification is found at Cys-2. 2 positions are modified to phosphoserine: Ser-22 and Ser-24. The span at 23 to 37 shows a compositional bias: acidic residues; the sequence is DSGDDAGWEDEDADA. The segment at 46–69 adopts a C2H2-type zinc-finger fold; the sequence is TPCLFCDRLFRSAEETFSHCKLEH. Ser-169 bears the Phosphoserine mark. The segment at 184–528 is mediates interaction with ALDH1A1; the sequence is MKQFAQDFVM…NSSTQTYSLQ (345 aa). Residues 214 to 528 form the SAM-dependent MTase PRMT-type domain; sequence DGVYFSSYGH…NSSTQTYSLQ (315 aa). Residues Arg-236, Gly-260, Asp-282, Ser-284, Ile-310, and Glu-311 each contribute to the S-adenosyl-L-homocysteine site. Active-site residues include Glu-326 and Glu-335.

It belongs to the class I-like SAM-binding methyltransferase superfamily. Protein arginine N-methyltransferase family. In terms of assembly, monomer and homodimer. Interacts with EPB41L3 (via FERM domain); the interaction is direct and inhibits the protein-arginine N-methyltransferase activity of PRMT3. Interacts with the 40S ribosomal protein RPS2. Interacts with ALDH1A1; the interaction is direct, inhibits ALDH1A1 aldehyde dehydrogenase activity and is independent of the methyltransferase activity of PRMT3. In terms of tissue distribution, ubiquitously expressed.

Its subcellular location is the cytoplasm. It localises to the cytosol. The protein resides in the nucleus. The catalysed reaction is L-arginyl-[protein] + S-adenosyl-L-methionine = N(omega)-methyl-L-arginyl-[protein] + S-adenosyl-L-homocysteine + H(+). It carries out the reaction L-arginyl-[protein] + 2 S-adenosyl-L-methionine = N(omega),N(omega)-dimethyl-L-arginyl-[protein] + 2 S-adenosyl-L-homocysteine + 2 H(+). Its activity is regulated as follows. Inhibited by N-ethylmaleimide and high concentrations of zinc chloride. Its function is as follows. Protein-arginine N-methyltransferase that catalyzes both the monomethylation and asymmetric dimethylation of the guanidino nitrogens of arginine residues in target proteins, and therefore falls into the group of type I methyltransferases. Catalyzes the asymmetric arginine dimethylation at multiple sites in the Arg/Gly-rich region of small ribosomal subunit protein uS5/RPS2. Also appears to methylate other ribosomal proteins. May regulate retinoic acid synthesis and signaling by inhibiting ALDH1A1 retinal dehydrogenase activity. Contributes to methylation of histone H4 'Arg-3', a specific tag for epigenetic transcriptional activation. Promotes osteogenesis. In Rattus norvegicus (Rat), this protein is Protein arginine N-methyltransferase 3.